The primary structure comprises 89 residues: UPF0223 protein BcerKBAB4_3787 (89 aa).

It belongs to the UPF0223 family.

This Bacillus mycoides (strain KBAB4) (Bacillus weihenstephanensis) protein is UPF0223 protein BcerKBAB4_3787.